The primary structure comprises 129 residues: uncharacterized protein (129 aa).

This is an uncharacterized protein from Streptococcus pyogenes serotype M6 (strain ATCC BAA-946 / MGAS10394).